Here is a 1299-residue protein sequence, read N- to C-terminus: DNA-directed RNA polymerase subunit beta' (1299 aa).

Residues Cys60, Cys62, Cys75, and Cys78 each coordinate Zn(2+). Residues 188–209 are disordered; the sequence is GAKSDQKRRAKDGAEKEMGQTR. The Mg(2+) site is built by Asp535, Asp537, and Asp539. 4 residues coordinate Zn(2+): Cys882, Cys959, Cys966, and Cys969.

The protein belongs to the RNA polymerase beta' chain family. The RNAP catalytic core consists of 2 alpha, 1 beta, 1 beta' and 1 omega subunit. When a sigma factor is associated with the core the holoenzyme is formed, which can initiate transcription. Mg(2+) serves as cofactor. The cofactor is Zn(2+).

It carries out the reaction RNA(n) + a ribonucleoside 5'-triphosphate = RNA(n+1) + diphosphate. Functionally, DNA-dependent RNA polymerase catalyzes the transcription of DNA into RNA using the four ribonucleoside triphosphates as substrates. The polypeptide is DNA-directed RNA polymerase subunit beta' (Clavibacter sepedonicus (Clavibacter michiganensis subsp. sepedonicus)).